The chain runs to 766 residues: Protein transport protein Sec23B (766 aa).

N-acetylalanine is present on alanine 2. Positions 61, 66, 85, and 88 each coordinate Zn(2+). At lysine 564 the chain carries N6-acetyllysine. The stretch at proline 633–leucine 719 is one Gelsolin-like repeat.

This sequence belongs to the SEC23/SEC24 family. SEC23 subfamily. COPII is composed of at least five proteins: the Sec23/24 complex, the Sec13/31 complex and Sar1. Interacts with SAR1A.

It localises to the cytoplasmic vesicle. Its subcellular location is the COPII-coated vesicle membrane. The protein resides in the endoplasmic reticulum membrane. The protein localises to the cytoplasm. It is found in the cytosol. Component of the coat protein complex II (COPII) which promotes the formation of transport vesicles from the endoplasmic reticulum (ER). The coat has two main functions, the physical deformation of the endoplasmic reticulum membrane into vesicles and the selection of cargo molecules for their transport to the Golgi complex. This is Protein transport protein Sec23B from Pongo abelii (Sumatran orangutan).